We begin with the raw amino-acid sequence, 632 residues long: Chaperone protein HtpG (632 aa).

The segment at 1 to 339 (MTQQTMSFQA…SSDLPLNVSR (339 aa)) is a; substrate-binding. Residues 340-559 (EILQESRDVK…DNDMSGYLQR (220 aa)) form a b region. The interval 560–632 (MLKAAGQSAP…TNALLLSRAA (73 aa)) is c.

It belongs to the heat shock protein 90 family. In terms of assembly, homodimer.

The protein localises to the cytoplasm. Its function is as follows. Molecular chaperone. Has ATPase activity. This chain is Chaperone protein HtpG, found in Burkholderia pseudomallei (strain 668).